The following is a 199-amino-acid chain: Female-specific protein transformer (199 aa).

Disordered regions lie at residues 1-121 (MDAD…RTPR) and 178-199 (YRAG…QAPN). Residues 20 to 37 (REKMPYFADEVRERDRVR) show a composition bias toward basic and acidic residues. Composition is skewed to basic residues over residues 56-69 (RRSR…RSRT), 77-92 (CQRR…RSGS), and 102-119 (SRRR…RSRT).

It localises to the nucleus speckle. Its function is as follows. Member of the regulatory pathway controlling female somatic sexual differentiation, regulated by Sxl. Activates dsx female-specific splicing by promoting the formation of a splicing enhancer complex which consists of tra, tra2 and sr proteins. This is Female-specific protein transformer (tra) from Drosophila virilis (Fruit fly).